A 280-amino-acid chain; its full sequence is Pre-mRNA-splicing factor PRP21 (280 aa).

An SURP motif 1 repeat occupies 11-49; sequence DIKTTVNYIKQHGVEFENKLLEDERFSFIKKDDPLHEYY. The tract at residues 53-72 is disordered; it reads MNEPTDTVSGEDNDRKSERE. An SURP motif 2 repeat occupies 95-135; that stretch reads VIKLTARYYAKDKSIVEQMISKDGEARLNFMNSSHPLHKTF. Composition is skewed to basic and acidic residues over residues 246 to 261 and 269 to 280; these read EKIVSDQGKQKGGDSK and AVGETRLKKSKK. Positions 246 to 280 are disordered; that stretch reads EKIVSDQGKQKGGDSKGKKRKIRAVGETRLKKSKK.

As to quaternary structure, belongs to the CWC complex (or CEF1-associated complex), a spliceosome sub-complex reminiscent of a late-stage spliceosome composed of the U2, U5 and U6 snRNAs and at least BUD13, BUD31, BRR2, CDC40, CEF1, CLF1, CUS1, CWC2, CWC15, CWC21, CWC22, CWC23, CWC24, CWC25, CWC27, ECM2, HSH155, IST3, ISY1, LEA1, MSL1, NTC20, PRP8, PRP9, PRP11, PRP19, PRP21, PRP22, PRP45, PRP46, SLU7, SMB1, SMD1, SMD2, SMD3, SMX2, SMX3, SNT309, SNU114, SPP2, SYF1, SYF2, RSE1 and YJU2.

The protein resides in the nucleus. Functionally, mRNA splicing factors, PRP9, PRP11, and PRP21, are necessary for binding of the U2 snRNP to the pre-mRNA in an early step of spliceosome assembly. This chain is Pre-mRNA-splicing factor PRP21 (PRP21), found in Saccharomyces cerevisiae (strain ATCC 204508 / S288c) (Baker's yeast).